Reading from the N-terminus, the 346-residue chain is tRNA N6-adenosine threonylcarbamoyltransferase (346 aa).

The Fe cation site is built by histidine 111 and histidine 115. Substrate contacts are provided by residues 134–138, aspartate 167, glycine 180, and asparagine 279; that span reads LVSGG. Fe cation is bound at residue aspartate 307.

The protein belongs to the KAE1 / TsaD family. Requires Fe(2+) as cofactor.

The protein resides in the cytoplasm. It catalyses the reaction L-threonylcarbamoyladenylate + adenosine(37) in tRNA = N(6)-L-threonylcarbamoyladenosine(37) in tRNA + AMP + H(+). Required for the formation of a threonylcarbamoyl group on adenosine at position 37 (t(6)A37) in tRNAs that read codons beginning with adenine. Is involved in the transfer of the threonylcarbamoyl moiety of threonylcarbamoyl-AMP (TC-AMP) to the N6 group of A37, together with TsaE and TsaB. TsaD likely plays a direct catalytic role in this reaction. The sequence is that of tRNA N6-adenosine threonylcarbamoyltransferase from Burkholderia cenocepacia (strain HI2424).